The chain runs to 207 residues: LexA repressor (207 aa).

The H-T-H motif DNA-binding region spans 28-48 (RAEIASRLGFKSANAAEEHLK). Catalysis depends on for autocatalytic cleavage activity residues Ser-124 and Lys-161.

It belongs to the peptidase S24 family. In terms of assembly, homodimer.

It catalyses the reaction Hydrolysis of Ala-|-Gly bond in repressor LexA.. Its function is as follows. Represses a number of genes involved in the response to DNA damage (SOS response), including recA and lexA. In the presence of single-stranded DNA, RecA interacts with LexA causing an autocatalytic cleavage which disrupts the DNA-binding part of LexA, leading to derepression of the SOS regulon and eventually DNA repair. The protein is LexA repressor of Shewanella amazonensis (strain ATCC BAA-1098 / SB2B).